The following is a 522-amino-acid chain: Putative E3 ubiquitin-protein ligase RING1a (522 aa).

Residues 1 to 10 are compositionally biased toward polar residues; it reads MSVKNNSFSS. Residues 1 to 119 form a disordered region; it reads MSVKNNSFSS…RSPSSISGDQ (119 aa). Basic and acidic residues predominate over residues 32–64; the sequence is LQEKDETKEEKEGDEEVKHDEAEEDQEVVKPND. Residues 65 to 106 are compositionally biased toward acidic residues; it reads AEEDDDGDDAEEDEEEEVEAEEDEEAEEEEEEEEEEEEEEED. Residues 136–176 form an RING-type zinc finger; the sequence is CPICLGIIKKTRTVMECLHRFCRECIDKSMRLGNNECPACR. 2 disordered regions span residues 250 to 347 and 363 to 385; these read VLMR…DTKG and RGGT…KSVR. The segment covering 287-306 has biased composition (basic and acidic residues); the sequence is NNNRGRDKDSSSDERGTEVR. A compositionally biased stretch (low complexity) spans 316–325; that stretch reads SRSTQHPSSS. 2 stretches are compositionally biased toward polar residues: residues 326 to 336 and 366 to 384; these read GANKNNGNCAD and TRSN…SKSV.

As to quaternary structure, homodimer or heterodimer with RING1B. Interacts with CLF. Component of the PRC1-like complex, at least composed of RING1A, RING1B and LHP1.

It localises to the nucleus. The enzyme catalyses S-ubiquitinyl-[E2 ubiquitin-conjugating enzyme]-L-cysteine + [acceptor protein]-L-lysine = [E2 ubiquitin-conjugating enzyme]-L-cysteine + N(6)-ubiquitinyl-[acceptor protein]-L-lysine.. Its pathway is protein modification; protein ubiquitination. Functionally, putative E3 ubiquitin-protein ligase that mediates monoubiquitination of 'Lys-119' of histone H2A (H2AK119ub), thereby playing a central role in histone code and gene regulation. As part of the PRC1-like complex, repress class I KNOX gene expression. PcG PRC1 complex maintains the transcriptionally repressive state of many genes, including Hox genes, throughout development. PcG PRC1 complex acts via chromatin remodeling and modification of histones, rendering chromatin heritably changed in its expressibility. The sequence is that of Putative E3 ubiquitin-protein ligase RING1a (RING1A) from Arabidopsis thaliana (Mouse-ear cress).